A 199-amino-acid polypeptide reads, in one-letter code: Acireductone dioxygenase 1 (199 aa).

Residues His-99, His-101, Glu-105, and His-144 each contribute to the Fe(2+) site. Ni(2+) is bound by residues His-99, His-101, Glu-105, and His-144.

The protein belongs to the acireductone dioxygenase (ARD) family. Fe(2+) serves as cofactor. Ni(2+) is required as a cofactor.

It is found in the cytoplasm. Its subcellular location is the nucleus. The enzyme catalyses 1,2-dihydroxy-5-(methylsulfanyl)pent-1-en-3-one + O2 = 4-methylsulfanyl-2-oxobutanoate + formate + 2 H(+). It carries out the reaction 1,2-dihydroxy-5-(methylsulfanyl)pent-1-en-3-one + O2 = 3-(methylsulfanyl)propanoate + CO + formate + 2 H(+). It functions in the pathway amino-acid biosynthesis; L-methionine biosynthesis via salvage pathway; L-methionine from S-methyl-5-thio-alpha-D-ribose 1-phosphate: step 5/6. Functionally, catalyzes 2 different reactions between oxygen and the acireductone 1,2-dihydroxy-3-keto-5-methylthiopentene (DHK-MTPene) depending upon the metal bound in the active site. Fe-containing acireductone dioxygenase (Fe-ARD) produces formate and 2-keto-4-methylthiobutyrate (KMTB), the alpha-ketoacid precursor of methionine in the methionine recycle pathway. Ni-containing acireductone dioxygenase (Ni-ARD) produces methylthiopropionate, carbon monoxide and formate, and does not lie on the methionine recycle pathway. This is Acireductone dioxygenase 1 (ARD1) from Oryza sativa subsp. indica (Rice).